Here is a 124-residue protein sequence, read N- to C-terminus: Fluoride-specific ion channel FluC (124 aa).

4 consecutive transmembrane segments (helical) span residues 5–25, 38–58, 69–89, and 97–117; these read ILAVSAAGIAGTLLRFAAGTW, TLAVNLVGCLIIGLLYGWFLL, GLIVGFVGGLTTFSSFSLDTL, and ALIAFGYLGISVFGGLLATWA. The Na(+) site is built by glycine 76 and threonine 79.

The protein belongs to the fluoride channel Fluc/FEX (TC 1.A.43) family.

It is found in the cell inner membrane. It carries out the reaction fluoride(in) = fluoride(out). With respect to regulation, na(+) is not transported, but it plays an essential structural role and its presence is essential for fluoride channel function. Functionally, fluoride-specific ion channel. Important for reducing fluoride concentration in the cell, thus reducing its toxicity. The chain is Fluoride-specific ion channel FluC from Pseudomonas fluorescens (strain SBW25).